Here is a 774-residue protein sequence, read N- to C-terminus: Beta-xylosidase/alpha-L-arabinofuranosidase 1 (774 aa).

Positions Ala1–Gly33 are cleaved as a signal peptide. N-linked (GlcNAc...) asparagine glycosylation is found at Asn48 and Asn136. Asp303 is a catalytic residue. Residues Asn437 and Asn530 are each glycosylated (N-linked (GlcNAc...) asparagine).

It belongs to the glycoside hydrolase 3 family. Post-translationally, proteolytically cleaved in roots to form a 65 kDa protein.

The protein localises to the secreted. Its subcellular location is the extracellular space. The protein resides in the extracellular matrix. The catalysed reaction is Hydrolysis of (1-&gt;4)-beta-D-xylans, to remove successive D-xylose residues from the non-reducing termini.. It catalyses the reaction Hydrolysis of terminal non-reducing alpha-L-arabinofuranoside residues in alpha-L-arabinosides.. A bifunctional beta-xylosidase/alpha-L-arabinosidase, exo-enzyme that acts synergistically with endohydrolases. Releases xylose and arabinose from cell walls. Does not cleave xylan from oat spelts although xylan from oat spelts was degraded to xylose when this enzyme was used in combination with xylanase. Also releases xylose and arabinose from aryl glycosides, xylo-oligosaccharides, arabinan from sugar beet and arabino-oligosaccharides, arabinan from sugar beet and arabinoxylan from wheat. This Medicago sativa subsp. varia (Alfalfa) protein is Beta-xylosidase/alpha-L-arabinofuranosidase 1.